A 130-amino-acid chain; its full sequence is MAEKDKWGVAHVYSSFNNTIITVTDITGAETITQWSGGKVVRSDRQESSPFAAMEAANRVADDIKEKGIAGLHIKVRASGGNGPRTPGPGAQATIRALARAGIKIGKIEDVTPIPHDGTGRPGGKRGRRV.

The tract at residues glutamate 109–valine 130 is disordered.

The protein belongs to the universal ribosomal protein uS11 family. Part of the 30S ribosomal subunit.

Located on the platform of the 30S subunit. The polypeptide is Small ribosomal subunit protein uS11 (Methanosphaera stadtmanae (strain ATCC 43021 / DSM 3091 / JCM 11832 / MCB-3)).